We begin with the raw amino-acid sequence, 831 residues long: von Willebrand factor A domain-containing protein DDB_G0285981 (831 aa).

The 129-residue stretch at 60-188 (RDTFGLKTFS…NVTIHLTIIS (129 aa)) folds into the VIT domain. Residues 312–480 (EFIFLIDCSG…NFEEQVMKLV (169 aa)) enclose the VWFA domain.

The chain is von Willebrand factor A domain-containing protein DDB_G0285981 from Dictyostelium discoideum (Social amoeba).